Here is a 562-residue protein sequence, read N- to C-terminus: MSGTILENLSGRKLSILVSSLMLCQVACFLMGGLYAPVPAGHQTVVGIKCRDVPGRQNDTNFFLYSRGNGACKSLQDMDIEQDPLKMANQLVYVFQMPLPRDNRTLDYSRWQQNLIGVLQVDIAYDSSSELREPPKELQLTIDTRLAYRNKKDADTDWKLYAHSVEQRYLDCHAAHVGLLETLYTCDIIPLFELGALHHNFYLLNLRFPIDTPKRMNLQFGHMHDLTLTAIHQNGGFTQVWLLLKTLLFPFVVGIMIWFWRRVHILQRSPALLEYMLLYLGGALSFLNLPLEYLTLSIEMPYMLLLSDVRQGIFYAMLLSFWLVFAGEHMLIQDTPNKSTIRSRYWKHLSAVVVGCISLFVFDICERGVQLRNPFYSIWTTPLGAKVAMSFIVLAGVSAAIYFLFLCFMVWKVFKDIGDKRTSLPSMSQARRLHYEGLIYRFKFLMLATLLCAGLTVAGFIMGQMAEGHWKWNEDIEIQLTSAFLTGVYGMWNIYIFALIILYAPSHKQWPTMRHSDETTQSNENIVASAASEEIEFSNLPSDSNPSEISSLTSFTRKVAFD.

Residues 1–13 (MSGTILENLSGRK) are Cytoplasmic-facing. A helical transmembrane segment spans residues 14-34 (LSILVSSLMLCQVACFLMGGL). Residues 35–239 (YAPVPAGHQT…AIHQNGGFTQ (205 aa)) are Lumenal-facing. N-linked (GlcNAc...) asparagine glycosylation is found at asparagine 58 and asparagine 103. The chain crosses the membrane as a helical span at residues 240–260 (VWLLLKTLLFPFVVGIMIWFW). Topologically, residues 261–270 (RRVHILQRSP) are cytoplasmic. The chain crosses the membrane as a helical span at residues 271–291 (ALLEYMLLYLGGALSFLNLPL). The Lumenal portion of the chain corresponds to 292–311 (EYLTLSIEMPYMLLLSDVRQ). A helical transmembrane segment spans residues 312-332 (GIFYAMLLSFWLVFAGEHMLI). Topologically, residues 333-344 (QDTPNKSTIRSR) are cytoplasmic. A helical membrane pass occupies residues 345-365 (YWKHLSAVVVGCISLFVFDIC). Residues 366–390 (ERGVQLRNPFYSIWTTPLGAKVAMS) lie on the Lumenal side of the membrane. The chain crosses the membrane as a helical span at residues 391–411 (FIVLAGVSAAIYFLFLCFMVW). Topologically, residues 412–441 (KVFKDIGDKRTSLPSMSQARRLHYEGLIYR) are cytoplasmic. The chain crosses the membrane as a helical span at residues 442-462 (FKFLMLATLLCAGLTVAGFIM). Over 463-482 (GQMAEGHWKWNEDIEIQLTS) the chain is Lumenal. Residues 483–503 (AFLTGVYGMWNIYIFALIILY) form a helical membrane-spanning segment. The Cytoplasmic segment spans residues 504–562 (APSHKQWPTMRHSDETTQSNENIVASAASEEIEFSNLPSDSNPSEISSLTSFTRKVAFD).

Belongs to the wntless family. Interacts with wg; in the Golgi. Interacts with Vps35, a component of the retromer complex; wls stability is regulated by Vps35.

It is found in the presynaptic cell membrane. The protein localises to the postsynaptic cell membrane. It localises to the cell membrane. The protein resides in the endoplasmic reticulum membrane. Its subcellular location is the endosome membrane. It is found in the golgi apparatus membrane. Its function is as follows. A segment polarity gene required for wingless (wg)-dependent patterning processes, acting in both wg-sending cells and wg-target cells. In non-neuronal cells wls directs wg secretion. The wls traffic loop encompasses the Golgi, the cell surface, an endocytic compartment and a retrograde route leading back to the Golgi, and involves clathrin-mediated endocytosis and the retromer complex (a conserved protein complex consisting of Vps35 and Vps26). In neuronal cells (the larval motorneuron NMJ), the wg signal moves across the synapse via the release of wls-containing exosome-like vesicles. Postsynaptic wls is required for the trafficking of fz2 through the fz2-interacting protein Grip. This Drosophila virilis (Fruit fly) protein is Protein wntless.